A 117-amino-acid chain; its full sequence is Aspartate 1-decarboxylase (117 aa).

The active-site Schiff-base intermediate with substrate; via pyruvic acid is Ser-25. Residue Ser-25 is modified to Pyruvic acid (Ser). Thr-57 lines the substrate pocket. Tyr-58 (proton donor) is an active-site residue. 73-75 (GAA) contacts substrate.

This sequence belongs to the PanD family. In terms of assembly, heterooctamer of four alpha and four beta subunits. Pyruvate is required as a cofactor. In terms of processing, is synthesized initially as an inactive proenzyme, which is activated by self-cleavage at a specific serine bond to produce a beta-subunit with a hydroxyl group at its C-terminus and an alpha-subunit with a pyruvoyl group at its N-terminus.

It localises to the cytoplasm. It catalyses the reaction L-aspartate + H(+) = beta-alanine + CO2. It functions in the pathway cofactor biosynthesis; (R)-pantothenate biosynthesis; beta-alanine from L-aspartate: step 1/1. Its function is as follows. Catalyzes the pyruvoyl-dependent decarboxylation of aspartate to produce beta-alanine. This is Aspartate 1-decarboxylase from Bacteroides thetaiotaomicron (strain ATCC 29148 / DSM 2079 / JCM 5827 / CCUG 10774 / NCTC 10582 / VPI-5482 / E50).